Consider the following 180-residue polypeptide: Large ribosomal subunit protein uL6 (180 aa).

Belongs to the universal ribosomal protein uL6 family. As to quaternary structure, part of the 50S ribosomal subunit.

This protein binds to the 23S rRNA, and is important in its secondary structure. It is located near the subunit interface in the base of the L7/L12 stalk, and near the tRNA binding site of the peptidyltransferase center. The polypeptide is Large ribosomal subunit protein uL6 (Clostridium botulinum (strain Eklund 17B / Type B)).